The chain runs to 93 residues: Putative protein adenylyltransferase MJ0435 (93 aa).

Positions 26 to 40 (GSYARNEQKETSDID) match the GSX(10)DXD motif motif. Asp38, Asp40, and Asp70 together coordinate Mg(2+).

This sequence belongs to the MntA antitoxin family. Probably forms a complex with cognate toxin MJ0434. Requires Mg(2+) as cofactor.

The catalysed reaction is L-tyrosyl-[protein] + ATP = O-(5'-adenylyl)-L-tyrosyl-[protein] + diphosphate. It carries out the reaction O-(5'-adenylyl)-L-tyrosyl-[protein] + ATP = O-[5'-(adenylyl-(5'-&gt;3')-adenylyl)]-L-tyrosyl-[protein] + diphosphate. In terms of biological role, probable antitoxin component of a putative type VII toxin-antitoxin (TA) system. Neutralizes cognate toxic MJ0434 by di-AMPylation. The polypeptide is Putative protein adenylyltransferase MJ0435 (Methanocaldococcus jannaschii (strain ATCC 43067 / DSM 2661 / JAL-1 / JCM 10045 / NBRC 100440) (Methanococcus jannaschii)).